The chain runs to 262 residues: NADP-dependent mannitol dehydrogenase (262 aa).

The NADP(+) site is built by Ile-23, Asp-69, Asn-96, and Arg-129. Ser-149 serves as the catalytic Proton donor. Positions 169, 173, 202, 204, and 206 each coordinate NADP(+). Tyr-169 acts as the Proton acceptor in catalysis. Lys-173 serves as the catalytic Lowers pKa of active site Tyr.

Belongs to the short-chain dehydrogenases/reductases (SDR) family. Homotetramer.

The enzyme catalyses D-mannitol + NADP(+) = D-fructose + NADPH + H(+). In Agaricus bisporus (White button mushroom), this protein is NADP-dependent mannitol dehydrogenase (mtdH).